A 558-amino-acid chain; its full sequence is MEDTRSVASLMDSTSSKIQQLQKAFAELESQRAVTLNLKWKELEEHFHGLERSLKRRFHELEDQEKEYETKTRKAQELLEKKKAAVEAKEKAALERLQKKRDAAMFTINSALDKYNNAPVSKPSVGERWPQNAVEDSSNVFAADSITDDNPDGIVQDVQISPVMGNYEVKAYPQLLKLCGDMDSTGLHKFVSDNRKNLASLKEEIPMAFRAAANPASLVLDSLEGFYPMEAPTADGKKDANLLGMRRTCIMLMECLSILLSGLDRNCLAVVLSQNVKHRAKTIAEGWNPLLESLDMDACNGNSLEAHAFLQLLATFAIVADFKEDELLKLIPMVSRRRQAAELCRSLGLAEKMPGVIEVLVNSGKQIDAVNLAFAFELTEQFSPVSLLKSYLIEARRSSPQGRPGNASPAVQDEFNERELIGLKTVIKCIEEHSLEEQYPVEPLHKRILQLEKAKADKKRATEPMKPQPKRPRGAQPRVTDNNNNINNNKTGYGRVIPERYPQYVYDNRPFLSGPIMAAQPPPPPPPQTYTFNPAPAHGNFYANCYQYQAPPPPPYFH.

The stretch at 9–102 forms a coiled coil; the sequence is SLMDSTSSKI…ALERLQKKRD (94 aa). Positions 454–463 are enriched in basic and acidic residues; it reads AKADKKRATE. Residues 454 to 494 form a disordered region; sequence AKADKKRATEPMKPQPKRPRGAQPRVTDNNNNINNNKTGYG.

Belongs to the Frigida family.

In Arabidopsis thaliana (Mouse-ear cress), this protein is FRIGIDA-like protein 3 (FRL3).